The primary structure comprises 442 residues: tRNA modification GTPase MnmE (442 aa).

Positions 23, 82, and 121 each coordinate (6S)-5-formyl-5,6,7,8-tetrahydrofolate. Residues 215–364 enclose the TrmE-type G domain; it reads GTSLILAGKP…VKQALIQWMQ (150 aa). Asn225 is a K(+) binding site. Residues 225–230, 244–250, 269–272, and 325–328 each bind GTP; these read NVGKSS, THIPGTT, DTAG, and NKAD. Ser229 provides a ligand contact to Mg(2+). Residues Thr244, Ile246, and Thr249 each coordinate K(+). Thr250 contributes to the Mg(2+) binding site. Lys442 provides a ligand contact to (6S)-5-formyl-5,6,7,8-tetrahydrofolate.

It belongs to the TRAFAC class TrmE-Era-EngA-EngB-Septin-like GTPase superfamily. TrmE GTPase family. In terms of assembly, homodimer. Heterotetramer of two MnmE and two MnmG subunits. K(+) serves as cofactor.

The protein localises to the cytoplasm. In terms of biological role, exhibits a very high intrinsic GTPase hydrolysis rate. Involved in the addition of a carboxymethylaminomethyl (cmnm) group at the wobble position (U34) of certain tRNAs, forming tRNA-cmnm(5)s(2)U34. This Chlamydia pneumoniae (Chlamydophila pneumoniae) protein is tRNA modification GTPase MnmE.